A 346-amino-acid polypeptide reads, in one-letter code: Histone PARylation factor 1 (346 aa).

Met-1 carries the N-acetylmethionine modification. A disordered region spans residues 1–23 (MVGGGGKRRPGGEGPQCEKTTDV). Lys-19 carries the post-translational modification N6-acetyllysine. The residue at position 97 (Ser-97) is an ADP-ribosylserine. N6-acetyllysine is present on residues Lys-186 and Lys-233. The residue at position 235 (Asp-235) is a PolyADP-ribosyl aspartic acid. Tyr-238 is subject to ADP-ribosyltyrosine. Position 240 is a polyADP-ribosyl glutamic acid (Glu-240). The tract at residues 242–346 (PETDADLKRI…SQENIDQLAA (105 aa)) is interaction with PARP1. Residue Glu-284 is the Proton donor of the active site.

It belongs to the HPF1 family. Interacts with PARP1 (via the PARP catalytic domain). Interacts with PARP2 (via the PARP catalytic domain). Interacts with core nucleosomes in a PARP1- and PARP2-dependent manner.

It localises to the chromosome. The protein localises to the nucleus. In terms of biological role, cofactor for serine ADP-ribosylation that confers serine specificity on PARP1 and PARP2 and plays a key role in DNA damage response. Initiates the repair of double-strand DNA breaks: recruited to DNA damage sites by PARP1 and PARP2 and switches the amino acid specificity of PARP1 and PARP2 from aspartate or glutamate to serine residues, licensing serine ADP-ribosylation of target proteins. Serine ADP-ribosylation of target proteins, such as histones, promotes decompaction of chromatin and the recruitment of repair factors leading to the reparation of DNA strand breaks. Serine ADP-ribosylation of proteins constitutes the primary form of ADP-ribosylation of proteins in response to DNA damage. HPF1 acts by completing the active site of PARP1 and PARP2: forms a composite active site composed of residues from HPF1 and PARP1 or PARP2. While HPF1 promotes the initiation of serine ADP-ribosylation, it restricts the polymerase activity of PARP1 and PARP2 in order to limit the length of poly-ADP-ribose chains. HPF1 also promotes tyrosine ADP-ribosylation, probably by conferring tyrosine specificity on PARP1. This chain is Histone PARylation factor 1, found in Homo sapiens (Human).